A 438-amino-acid polypeptide reads, in one-letter code: 2-(3-amino-3-carboxypropyl)histidine synthase subunit 1 (438 aa).

[4Fe-4S] cluster-binding residues include Cys-110, Cys-214, and Cys-342. Position 418 is a phosphoserine (Ser-418).

This sequence belongs to the DPH1/DPH2 family. DPH1 subfamily. In terms of assembly, component of the 2-(3-amino-3-carboxypropyl)histidine synthase complex composed of DPH1, DPH2, DPH3 and a NADH-dependent reductase. Interacts with DPH2 and RBM8A. The cofactor is [4Fe-4S] cluster.

The protein localises to the nucleus. It is found in the cytoplasm. It carries out the reaction L-histidyl-[translation elongation factor 2] + S-adenosyl-L-methionine = 2-[(3S)-amino-3-carboxypropyl]-L-histidyl-[translation elongation factor 2] + S-methyl-5'-thioadenosine + H(+). It functions in the pathway protein modification; peptidyl-diphthamide biosynthesis. In terms of biological role, catalyzes the first step of diphthamide biosynthesis, a post-translational modification of histidine which occurs in elongation factor 2. DPH1 and DPH2 transfer a 3-amino-3-carboxypropyl (ACP) group from S-adenosyl-L-methionine (SAM) to a histidine residue, the reaction is assisted by a reduction system comprising DPH3 and a NADH-dependent reductase. The protein is 2-(3-amino-3-carboxypropyl)histidine synthase subunit 1 (DPH1) of Bos taurus (Bovine).